Reading from the N-terminus, the 401-residue chain is Argininosuccinate synthase (401 aa).

ATP is bound by residues 10–18 (AYSGGLDTS) and alanine 37. An L-citrulline-binding site is contributed by tyrosine 89. Glycine 119 contributes to the ATP binding site. L-aspartate is bound by residues threonine 121, asparagine 125, and aspartate 126. Position 125 (asparagine 125) interacts with L-citrulline. L-citrulline contacts are provided by arginine 129, serine 178, serine 187, glutamate 263, and tyrosine 275.

Belongs to the argininosuccinate synthase family. Type 1 subfamily. In terms of assembly, homotetramer.

The protein resides in the cytoplasm. It catalyses the reaction L-citrulline + L-aspartate + ATP = 2-(N(omega)-L-arginino)succinate + AMP + diphosphate + H(+). Its pathway is amino-acid biosynthesis; L-arginine biosynthesis; L-arginine from L-ornithine and carbamoyl phosphate: step 2/3. The chain is Argininosuccinate synthase from Buchnera aphidicola subsp. Schizaphis graminum (strain Sg).